The chain runs to 252 residues: Probable transcriptional regulatory protein DSY2470 (252 aa).

It belongs to the TACO1 family.

The protein localises to the cytoplasm. This is Probable transcriptional regulatory protein DSY2470 from Desulfitobacterium hafniense (strain Y51).